We begin with the raw amino-acid sequence, 198 residues long: HTH-type transcriptional repressor DhaR (198 aa).

The HTH tetR-type domain maps to 4–64; it reads TPVRQHLVEK…QVLQEFFSDL (61 aa).

Its function is as follows. Transcriptional repressor for the dhaA haloalkane dehalogenase gene. The chain is HTH-type transcriptional repressor DhaR (dhaR) from Mycobacterium sp. (strain GP1).